The chain runs to 406 residues: Na(+)/H(+) antiporter NhaA (406 aa).

A run of 12 helical transmembrane segments spans residues 29-49, 75-95, 111-131, 141-161, 170-190, 195-215, 220-240, 242-262, 278-298, 306-326, 349-369, and 382-402; these read FAGILLIIAFTLAIIVSNNIF, FIELVNDGLMTFFFLLIGLEM, ILPAVAALGGVVVPVLIYMFF, GWAIPIATDTAFVLGILSFFS, AFIIGFSLIDDAFALIILALF, INTPALLISSVIIFILFILNY, QLFYYIIVGLLLWISMVESGI, GTLCGAIIALFIPVNIKGEFN, YFILPLFVFMNSGILLEYFAF, ILALIYGIIFGLFVGKQLGIM, FYSIAILGGIGFTLSLFIGSI, and AAVIIGSLISALFGVAVLKYC.

It belongs to the NhaA Na(+)/H(+) (TC 2.A.33) antiporter family.

The protein localises to the cell inner membrane. It catalyses the reaction Na(+)(in) + 2 H(+)(out) = Na(+)(out) + 2 H(+)(in). Its function is as follows. Na(+)/H(+) antiporter that extrudes sodium in exchange for external protons. The protein is Na(+)/H(+) antiporter NhaA of Rickettsia massiliae (strain Mtu5).